Here is a 1489-residue protein sequence, read N- to C-terminus: Sex-determining transformer protein 2 (1489 aa).

The signal sequence occupies residues 1–33 (MKLAFNKLLVASVVFTVLSFGLLLASLFTTTAT). The next 11 helical transmembrane spans lie at 454–474 (MIYF…AFAF), 489–509 (GFIT…ILID), 513–533 (LCYI…VTFI), 600–620 (YWFL…FFID), 622–642 (DVQK…FEEM), 749–769 (AVVV…LLFI), 931–951 (IFAA…FSIG), 958–978 (LAFA…VSLF), 986–1006 (YTNV…CDLA), 1041–1061 (VQIF…TAII), and 1066–1086 (AFFI…FNSL). Residues 1138–1288 (EFSIRPTENT…EQQEVTDDVA (151 aa)) form an interaction with fem-3 region. Disordered regions lie at residues 1143–1176 (PTEN…DPSM), 1233–1393 (LLRQ…YPPS), and 1412–1489 (RNLP…TPGL). Basic and acidic residues-rich tracts occupy residues 1275 to 1298 (DPAK…EVRK), 1326 to 1340 (VSRE…REPR), and 1423 to 1433 (RPRDWDQRRLV). Residues 1402-1423 (CEDVYWKYNERNLPDNVPMPPR) are MX regulatory domain; required for tra-1 binding. Positions 1444–1456 (VPPPGRSAIPIPP) are enriched in pro residues. Positions 1460–1482 (RLRERRREQHLREQEARRNRPES) are enriched in basic and acidic residues.

Interacts with tra-1 and fem-3.

The protein resides in the membrane. In terms of biological role, plays a major role in controlling sexual cell fates. Promotes female development in XX animals where it sequesters one or more of the FEM proteins to the membrane thereby freeing the tra-1 protein (a putative transcription factor) to enter the nucleus and promote female development. In XO animals it acts as a receptor for her-1 which prevents it from binding to FEM proteins thereby repressing the activity of tra-1. Negatively regulates male development when bound to fem-3 and is required together with tra-1 for promoting spermatogenesis. Also required for feminizing tra-3 activity. This Caenorhabditis briggsae protein is Sex-determining transformer protein 2.